The primary structure comprises 616 residues: Dihydroxy-acid dehydratase (616 aa).

Aspartate 81 contacts Mg(2+). Cysteine 122 contacts [2Fe-2S] cluster. Mg(2+) is bound by residues aspartate 123 and lysine 124. An N6-carboxylysine modification is found at lysine 124. Cysteine 195 provides a ligand contact to [2Fe-2S] cluster. Glutamate 491 contributes to the Mg(2+) binding site. Serine 517 acts as the Proton acceptor in catalysis.

The protein belongs to the IlvD/Edd family. As to quaternary structure, homodimer. It depends on [2Fe-2S] cluster as a cofactor. The cofactor is Mg(2+).

It catalyses the reaction (2R)-2,3-dihydroxy-3-methylbutanoate = 3-methyl-2-oxobutanoate + H2O. The enzyme catalyses (2R,3R)-2,3-dihydroxy-3-methylpentanoate = (S)-3-methyl-2-oxopentanoate + H2O. Its pathway is amino-acid biosynthesis; L-isoleucine biosynthesis; L-isoleucine from 2-oxobutanoate: step 3/4. The protein operates within amino-acid biosynthesis; L-valine biosynthesis; L-valine from pyruvate: step 3/4. Functions in the biosynthesis of branched-chain amino acids. Catalyzes the dehydration of (2R,3R)-2,3-dihydroxy-3-methylpentanoate (2,3-dihydroxy-3-methylvalerate) into 2-oxo-3-methylpentanoate (2-oxo-3-methylvalerate) and of (2R)-2,3-dihydroxy-3-methylbutanoate (2,3-dihydroxyisovalerate) into 2-oxo-3-methylbutanoate (2-oxoisovalerate), the penultimate precursor to L-isoleucine and L-valine, respectively. The sequence is that of Dihydroxy-acid dehydratase from Azoarcus sp. (strain BH72).